The sequence spans 351 residues: Photosystem II D2 protein (351 aa).

Residues 39–59 (TAYLAIGGWLTGTTFVTSWYT) traverse the membrane as a helical segment. His116 is a chlorophyll a binding site. The helical transmembrane segment at 123-139 (GFMLRQFEISRLVGIRP) threads the bilayer. Pheophytin a-binding residues include Gln128 and Asn141. Residues 151–164 (VFVSVFLIYPLGQS) traverse the membrane as a helical segment. His196 contributes to the chlorophyll a binding site. A helical membrane pass occupies residues 206 to 226 (GALLSAIHGVTVENTLYEDGE). Residues His213 and Phe260 each coordinate a plastoquinone. His213 contributes to the Fe cation binding site. His267 lines the Fe cation pocket. The helical transmembrane segment at 277 to 293 (GLWTSSIGIIGLALNLR) threads the bilayer.

It belongs to the reaction center PufL/M/PsbA/D family. As to quaternary structure, PSII is composed of 1 copy each of membrane proteins PsbA, PsbB, PsbC, PsbD, PsbE, PsbF, PsbH, PsbI, PsbJ, PsbK, PsbL, PsbM, PsbT, PsbX, PsbY, PsbZ, Psb30/Ycf12, peripheral proteins PsbO, CyanoQ (PsbQ), PsbU, PsbV and a large number of cofactors. It forms dimeric complexes. Requires The D1/D2 heterodimer binds P680, chlorophylls that are the primary electron donor of PSII, and subsequent electron acceptors. It shares a non-heme iron and each subunit binds pheophytin, quinone, additional chlorophylls, carotenoids and lipids. There is also a Cl(-1) ion associated with D1 and D2, which is required for oxygen evolution. The PSII complex binds additional chlorophylls, carotenoids and specific lipids. as cofactor.

The protein localises to the host cellular thylakoid membrane. It carries out the reaction 2 a plastoquinone + 4 hnu + 2 H2O = 2 a plastoquinol + O2. In terms of biological role, photosystem II (PSII) is a light-driven water:plastoquinone oxidoreductase that uses light energy to abstract electrons from H(2)O, generating O(2) and a proton gradient subsequently used for ATP formation. It consists of a core antenna complex that captures photons, and an electron transfer chain that converts photonic excitation into a charge separation. The D1/D2 (PsbA/PsbD) reaction center heterodimer binds P680, the primary electron donor of PSII as well as several subsequent electron acceptors. D2 is needed for assembly of a stable PSII complex. This Synechococcus protein is Photosystem II D2 protein (psbD).